The primary structure comprises 228 residues: MKHLKAFDEAQNDIKAVQKRLSTSSTILSGIQKNMAHLNLLQIGVLSLIAVGSVFAGNPCLKGPPVPKNAAECCVTPFLVEPSAFMTCHSKWIGQTKRQMAMEGIPRGCCVAECVMNSTSLYSNGKIDREALTKLYLASTKSMAPEWNKITLDAIDGCFKMADTIKDEIEAGAKLTPAFEGEQICHPISGTILACMGMTLFAECPAKLFTVNDDCNKLKSYHSKCPFL.

Cystine bridges form between C60–C225, C73–C215, C74–C204, C88–C114, C110–C185, and C158–C195. N-linked (GlcNAc...) asparagine glycosylation occurs at N117.

The protein belongs to the PBP/GOBP family. Post-translationally, glycosylated. Head without antennae (at protein level).

It localises to the secreted. Present in the aqueous fluid surrounding olfactory sensory dendrites and are thought to aid in the capture and transport of hydrophobic odorants into and through this fluid. Binds N-phenyl-1-naphthylamine, menthol, citronellal, 1-dodecanol, decanal, p-tert-butylbenzophenone, 4-hydroxy-4'-isopropylazobenzene, 2-pyrrolyl-p-methyl-azobenzene and indole. Expressed in mosquito head but barely detectable in antennae, which suggests that it may be present in mouth structures, such as palpi and proboscis, and may have a function in taste. This is Odorant-binding protein 47 from Anopheles gambiae (African malaria mosquito).